Here is a 247-residue protein sequence, read N- to C-terminus: UPF0280 protein MmarC7_0482 (247 aa).

The protein belongs to the UPF0280 family.

The sequence is that of UPF0280 protein MmarC7_0482 from Methanococcus maripaludis (strain C7 / ATCC BAA-1331).